We begin with the raw amino-acid sequence, 578 residues long: Vacuolar protein 8 (578 aa).

Glycine 2 is lipidated: N-myristoyl glycine. S-palmitoyl cysteine attachment occurs at residues cysteine 4, cysteine 5, and cysteine 7. Phosphoserine is present on residues serine 11 and serine 16. 9 ARM repeats span residues 37-75 (DKDQ…AEIT), 76-114 (EKYV…NLAV), 116-155 (NENK…NLAT), 157-196 (DDNK…NMTH), 198-237 (EENR…NIAV), 239-280 (EANR…NLAS), 282-321 (TSYQ…NISI), 323-363 (PLNE…NLAA), and 407-446 (DVSK…NLCS). Lysine 77 is covalently cross-linked (Glycyl lysine isopeptide (Lys-Gly) (interchain with G-Cter in ubiquitin)). Residue lysine 515 forms a Glycyl lysine isopeptide (Lys-Gly) (interchain with G-Cter in ubiquitin) linkage. Residues 527–557 (SGIDVKNPGSNNNPSSNDNNSNNNDTGSEHQ) form a disordered region. Residues 533 to 552 (NPGSNNNPSSNDNNSNNNDT) show a composition bias toward low complexity.

This sequence belongs to the beta-catenin family. As to quaternary structure, interacts with NVJ1. Forms heterotetramers of two VAC8 and two NVJ1 or two VAC8 and two ATG13. In terms of processing, palmitoylated on one or more of its N-terminal cysteine residues by PFA3, which is required for vacuole fusion.

It localises to the vacuole membrane. Functionally, functions in both vacuole inheritance and protein targeting from the cytoplasm to vacuole (cvt). Involved in the formation of nucleus-vacuole junctions (NVJs) during piecemeal microautophagy of the nucleus (PMN). NVJs are interorganelle interfaces mediated by NVJ1 in the nuclear envelope and VAC8 on the vacuole membrane. Together, NVJ1 and VAC8 form Velcro-like patches through which teardrop-like portions of the nucleus are pinched off into the vacuolar lumen and degraded by the PMN process. In Saccharomyces cerevisiae (strain ATCC 204508 / S288c) (Baker's yeast), this protein is Vacuolar protein 8 (VAC8).